A 90-amino-acid chain; its full sequence is NELL2-interacting cell ontogeny regulator 1 (90 aa).

A signal peptide spans 1–28; it reads MAPALRSLLSPRTLLLLLLSLALLGARA.

Belongs to the NICOL family. As to quaternary structure, interacts with NELL2; triggers epididymal differentiation. Interacts with cell surface receptor TFRC; the interaction mediates uptake of NICOL1 into fibroblasts. Expression is enriched in both male and female reproductive organs, including the testis, epididymis, seminal vesicles, coagulating glands, ovary and uterus, and in various non-reproductive organs such as brain, thymus and liver. In testis, expressed in both germ cells and Sertoli cells. Also expressed at low levels in the kidney. Expressed during neocortex and cerebellum development.

It is found in the secreted. The protein resides in the cytoplasm. It localises to the perinuclear region. In terms of biological role, mRNA-binding protein which interacts with a range of target mRNAs including SERPINE1, ACTA2, CCN2 and COL4A1 and may promote extracellular matrix production. Binds to the 3'-UTR of SERPINE1 mRNA and stabilizes the mRNA, possibly by competing for binding with SERBP1 and preventing SERBP1-mediated mRNA degradation. Also binds to the 3'-UTR of ACTA2. Testis-derived lumicrine factor that triggers epididymal differentiation and sperm maturation. The polypeptide is NELL2-interacting cell ontogeny regulator 1 (Mus musculus (Mouse)).